The primary structure comprises 437 residues: MRRAALRLCTLSKGLLAPSRGLTQESQNPENVFHIREVRDKLREIVGASTNWRDHVKAMEERKLLHSFLAKSQKGLPPRTMKDSYIEVFLPLGSQPELREKYLTVQNTVRFGRILEDLDSLGVLICYMHNKIHSAKMSPLSIVTALVDKIDMCKKNLSPEQDIKFSGHVSWVGKTSMEVKMHMFQLHGNDFSPVLDATFVMVARDSENKGPAFVNPLILESPEEEELFQQGELNKGRRVAFSSTSLLKMAPTAEERTTIHEMFLNTLDPKTISFRSRVLPANSVWMENSKLKSLDICHPQERNIFNRIFGGFLMRKAYELGWATACNFGGSRPFIVAVDDIMFQKPVEVGSLLFLSAQVCFTQGNYIQVRVHSEVASLQDKEHMTTNVFHFTFMSEKEVPLVFPRTYGESMLYLDGQRHFKSMSAPVTLKRNYVVEP.

Residues 1 to 21 (MRRAALRLCTLSKGLLAPSRG) constitute a mitochondrion transit peptide. HotDog ACOT-type domains are found at residues 84–207 (SYIE…RDSE) and 287–399 (ENSK…EKEV). At Lys101 the chain carries N6-acetyllysine.

The protein belongs to the acyl coenzyme A hydrolase family. In terms of assembly, interacts with NYAP1, NYAP2 and MYO16.

It localises to the mitochondrion. It is found in the mitochondrion matrix. The protein localises to the mitochondrion inner membrane. The catalysed reaction is butanoyl-CoA + H2O = butanoate + CoA + H(+). The enzyme catalyses propanoyl-CoA + H2O = propanoate + CoA + H(+). It catalyses the reaction hexadecanoyl-CoA + H2O = hexadecanoate + CoA + H(+). It carries out the reaction octanoyl-CoA + H2O = octanoate + CoA + H(+). The catalysed reaction is decanoyl-CoA + H2O = decanoate + CoA + H(+). The enzyme catalyses tetradecanoyl-CoA + H2O = tetradecanoate + CoA + H(+). It catalyses the reaction 4,8-dimethylnonanoyl-CoA + H2O = 4,8-dimethylnonanoate + CoA + H(+). It carries out the reaction 3-methylbutanoyl-CoA + H2O = 3-methylbutanoate + CoA + H(+). The catalysed reaction is 2-methylpropanoyl-CoA + H2O = 2-methylpropanoate + CoA + H(+). The protein operates within lipid metabolism; fatty acid metabolism. Its activity is regulated as follows. Strongly inhibited by NADH and CoA. Functionally, mitochondrial acyl-CoA thioesterase. Catalyzes the hydrolysis of acyl-CoAs into free fatty acids and coenzyme A (CoA), regulating their respective intracellular levels. Regulates both mitochondrial lipid and amino acid metabolism. This chain is Acyl-coenzyme A thioesterase 9, mitochondrial (ACOT9), found in Bos taurus (Bovine).